Here is a 686-residue protein sequence, read N- to C-terminus: U3 small nucleolar RNA-associated protein 4 homolog (686 aa).

14 WD repeats span residues 7–50 (HRVR…ANYF), 51–92 (QEKF…QALN), 93–135 (IKYA…PDKI), 136–181 (QFER…AVHK), 182–226 (MIVD…SATG), 227–275 (TLVK…SSEK), 276–317 (QWVR…LMEK), 318–377 (VEVK…PLSK), 378–427 (NADH…NISL), 428–475 (KRVS…KHLH), 476–516 (AFQP…VKQL), 517–566 (KLHC…WSRT), 567–627 (VQKQ…FPPT), and 628–666 (NESD…AVER). A Glycyl lysine isopeptide (Lys-Gly) (interchain with G-Cter in SUMO2) cross-link involves residue lysine 321.

Interacts with HIVEP1 Interacts with NOL11. Part of the small subunit (SSU) processome, composed of more than 70 proteins and the RNA chaperone small nucleolar RNA (snoRNA) U3. May be a component of the proposed t-UTP subcomplex of the ribosomal small subunit (SSU) processome containing at least UTP4, WDR43, HEATR1, UTP15, WDR75. In terms of processing, may be phosphorylated during mitosis; may control the association of this protein with WRD43 and UTP15.

It localises to the nucleus. It is found in the nucleolus. Its subcellular location is the chromosome. Ribosome biogenesis factor. Involved in nucleolar processing of pre-18S ribosomal RNA. Part of the small subunit (SSU) processome, first precursor of the small eukaryotic ribosomal subunit. During the assembly of the SSU processome in the nucleolus, many ribosome biogenesis factors, an RNA chaperone and ribosomal proteins associate with the nascent pre-rRNA and work in concert to generate RNA folding, modifications, rearrangements and cleavage as well as targeted d Involved in SSU pre-rRNA processing at sites A', A0, 1 and 2b. Required for optimal pre-ribosomal RNA transcription by RNA polymerase. May be a transcriptional regulator. In terms of biological role, (Microbial infection) Acts as a positive regulator of HIVEP1 which specifically binds to the DNA sequence 5'-GGGACTTTCC-3' found in enhancer elements of numerous viral promoters such as those of HIV-1, SV40, or CMV. The sequence is that of U3 small nucleolar RNA-associated protein 4 homolog from Homo sapiens (Human).